The primary structure comprises 664 residues: tRNA uridine 5-carboxymethylaminomethyl modification enzyme MnmG (664 aa).

FAD-binding positions include 14–19 (GGGHSG), Val126, and Ser183. NAD(+) is bound at residue 277–291 (GPRYCPSIEDKIDRF). Gln374 provides a ligand contact to FAD.

The protein belongs to the MnmG family. Homodimer. Heterotetramer of two MnmE and two MnmG subunits. FAD serves as cofactor.

It is found in the cytoplasm. NAD-binding protein involved in the addition of a carboxymethylaminomethyl (cmnm) group at the wobble position (U34) of certain tRNAs, forming tRNA-cmnm(5)s(2)U34. This is tRNA uridine 5-carboxymethylaminomethyl modification enzyme MnmG from Salinibacter ruber (strain DSM 13855 / M31).